Reading from the N-terminus, the 394-residue chain is Phosphopentomutase (394 aa).

Positions 14, 287, 292, 328, 329, and 340 each coordinate Mn(2+).

This sequence belongs to the phosphopentomutase family. It depends on Mn(2+) as a cofactor.

It localises to the cytoplasm. It carries out the reaction 2-deoxy-alpha-D-ribose 1-phosphate = 2-deoxy-D-ribose 5-phosphate. The catalysed reaction is alpha-D-ribose 1-phosphate = D-ribose 5-phosphate. Its pathway is carbohydrate degradation; 2-deoxy-D-ribose 1-phosphate degradation; D-glyceraldehyde 3-phosphate and acetaldehyde from 2-deoxy-alpha-D-ribose 1-phosphate: step 1/2. Isomerase that catalyzes the conversion of deoxy-ribose 1-phosphate (dRib-1-P) and ribose 1-phosphate (Rib-1-P) to deoxy-ribose 5-phosphate (dRib-5-P) and ribose 5-phosphate (Rib-5-P), respectively. The chain is Phosphopentomutase from Shouchella clausii (strain KSM-K16) (Alkalihalobacillus clausii).